A 433-amino-acid polypeptide reads, in one-letter code: Glutamate-1-semialdehyde 2,1-aminomutase (433 aa).

Position 273 is an N6-(pyridoxal phosphate)lysine (lysine 273).

The protein belongs to the class-III pyridoxal-phosphate-dependent aminotransferase family. HemL subfamily. Homodimer. Pyridoxal 5'-phosphate is required as a cofactor.

The protein localises to the cytoplasm. It catalyses the reaction (S)-4-amino-5-oxopentanoate = 5-aminolevulinate. It functions in the pathway porphyrin-containing compound metabolism; protoporphyrin-IX biosynthesis; 5-aminolevulinate from L-glutamyl-tRNA(Glu): step 2/2. The protein operates within porphyrin-containing compound metabolism; chlorophyll biosynthesis. This is Glutamate-1-semialdehyde 2,1-aminomutase from Rippkaea orientalis (strain PCC 8801 / RF-1) (Cyanothece sp. (strain PCC 8801)).